The following is a 620-amino-acid chain: MSRPGHGGLMPVNGLGFPPQNVARVVVWEWLNEHSRWRPYTATVCHHIENVLKEDARGSVVLGQVDAQLVPYIIDLQSMHQFRQDTGTMRPVRRNFYDPSSAPGKGIVWEWENDGGAWTAYDMDICITIQNAYEKQHPWLDLSSLGFCYLIYFNSMSQMNRQTRRRRRLRRRLDLAYPLTVGSIPKSQSWPVGASSGQPCSCQQCLLVNSTRAASNAILASQRRKAPPAPPLPPPPPPGGPPGALAVRPSATFTGAALWAAPAAGPAEPAPPPGAPPRSPGAPGGARTPGQNNLNRPGPQRTTSVSARASIPPGVPALPVKNLNGTGPVHPALAGMTGILLCAAGLPVCLTRAPKPILHPPPVSKSDVKPVPGVPGVCRKTKKKHLKKSKNPEDVVRRYMQKVKNPPDEDCTICMERLVTASGYEGVLRHKGVRPELVGRLGRCGHMYHLLCLVAMYSNGNKDGSLQCPTCKAIYGEKTGTQPPGKMEFHLIPHSLPGFPDTQTIRIVYDIPTGIQGPEHPNPGKKFTARGFPRHCYLPNNEKGRKVLRLLITAWERRLIFTIGTSNTTGESDTVVWNEIHHKTEFGSNLTGHGYPDASYLDNVLAELTAQGVSEAAAKA.

WWE domains lie at 14-94 and 95-171; these read GLGF…PVRR and NFYD…RLRR. Disordered regions lie at residues 221–248, 262–313, and 361–391; these read SQRR…LAVR, PAAG…SIPP, and PPVS…KSKN. Pro residues-rich tracts occupy residues 227-241 and 268-280; these read PPAP…PGGP and EPAP…PRSP. An SH3-binding motif is present at residues 230 to 233; sequence PPLP. Residues 291 to 307 show a composition bias toward polar residues; the sequence is QNNLNRPGPQRTTSVSA. Positions 379-389 are enriched in basic residues; the sequence is RKTKKKHLKKS. An RING-type zinc finger spans residues 411-472; it reads CTICMERLVT…DGSLQCPTCK (62 aa).

It belongs to the Deltex family. Homodimer. May form a heterodimer with other members of the Deltex family. Interacts with NOTCH1 via its N-terminal region and EIF3F, the interaction is required for NOTCH1 deubiquitination. Interacts with EP300. Forms a heterodimer with BBAP; the heterodimerization leading to an increase of in vitro ubiquitin ligase activity. Interacts with ITCH. Ubiquitinated; undergoes 'Lys-29'-linked polyubiquitination catalyzed by ITCH. As to expression, widely expressed. Strongly expressed in blood vessel. Also expressed in embryonic nervous system, pancreas, lung, adrenal gland, digestive tube and muscles. Expressed in MZB cells and developing B- and T-cells.

The protein localises to the cytoplasm. It localises to the nucleus. The catalysed reaction is S-ubiquitinyl-[E2 ubiquitin-conjugating enzyme]-L-cysteine + [acceptor protein]-L-lysine = [E2 ubiquitin-conjugating enzyme]-L-cysteine + N(6)-ubiquitinyl-[acceptor protein]-L-lysine.. The protein operates within protein modification; protein ubiquitination. Functions as a ubiquitin ligase protein in vivo, mediating ubiquitination and promoting degradation of MEKK1, suggesting that it may regulate the Notch pathway via some ubiquitin ligase activity. Regulator of Notch signaling, a signaling pathway involved in cell-cell communications that regulates a broad spectrum of cell-fate determinations. Mainly acts as a positive regulator of Notch, but it also acts as a negative regulator, depending on the developmental and cell context. Mediates the antineural activity of Notch, possibly by inhibiting the transcriptional activation mediated by MATCH1. Involved in neurogenesis, lymphogenesis and myogenesis, and may also be involved in MZB (Marginal zone B) cell differentiation. Promotes B-cell development at the expense of T-cell development, suggesting that it can antagonize NOTCH1. This Homo sapiens (Human) protein is E3 ubiquitin-protein ligase DTX1 (DTX1).